The sequence spans 297 residues: Ribosomal protein L11 methyltransferase (297 aa).

Residues threonine 150, glycine 171, aspartate 193, and asparagine 233 each coordinate S-adenosyl-L-methionine.

Belongs to the methyltransferase superfamily. PrmA family.

The protein resides in the cytoplasm. It carries out the reaction L-lysyl-[protein] + 3 S-adenosyl-L-methionine = N(6),N(6),N(6)-trimethyl-L-lysyl-[protein] + 3 S-adenosyl-L-homocysteine + 3 H(+). Methylates ribosomal protein L11. This Laribacter hongkongensis (strain HLHK9) protein is Ribosomal protein L11 methyltransferase.